We begin with the raw amino-acid sequence, 422 residues long: Gamma-glutamyl phosphate reductase (422 aa).

It belongs to the gamma-glutamyl phosphate reductase family.

The protein resides in the cytoplasm. The catalysed reaction is L-glutamate 5-semialdehyde + phosphate + NADP(+) = L-glutamyl 5-phosphate + NADPH + H(+). It functions in the pathway amino-acid biosynthesis; L-proline biosynthesis; L-glutamate 5-semialdehyde from L-glutamate: step 2/2. In terms of biological role, catalyzes the NADPH-dependent reduction of L-glutamate 5-phosphate into L-glutamate 5-semialdehyde and phosphate. The product spontaneously undergoes cyclization to form 1-pyrroline-5-carboxylate. The protein is Gamma-glutamyl phosphate reductase of Nitrosomonas europaea (strain ATCC 19718 / CIP 103999 / KCTC 2705 / NBRC 14298).